The primary structure comprises 739 residues: Adenosylcobalamin-dependent ribonucleoside-triphosphate reductase (739 aa).

Cys119 and Cys419 form a disulfide bridge. The interval 147–158 is effector region-1; sequence SMPFSFLFDELM. The segment at 168 to 313 is effector region-2; the sequence is ARSNISQIPR…ICNLIGKAVV (146 aa). Active-site residues include Cys408 and Glu410. The interval 565–626 is adenosylcobalamin-binding-1; sequence FHYGAYLIQR…NPNFASAGTV (62 aa). The tract at residues 685 to 724 is adenosylcobalamin-binding-2; that stretch reads LQQAPKEPIDKETYEKRSQEITGNVEEVFSQLNSDVKDLE.

Belongs to the class II ribonucleoside-triphosphate reductase family. In terms of assembly, monomer. Requires adenosylcob(III)alamin as cofactor.

The catalysed reaction is a 2'-deoxyribonucleoside 5'-triphosphate + [thioredoxin]-disulfide + H2O = a ribonucleoside 5'-triphosphate + [thioredoxin]-dithiol. Its activity is regulated as follows. Allosterically regulated by ATP and dNTP. In Lactobacillus delbrueckii subsp. bulgaricus (strain ATCC BAA-365 / Lb-18), this protein is Adenosylcobalamin-dependent ribonucleoside-triphosphate reductase (rtpR).